The sequence spans 238 residues: tRNA (guanine-N(7)-)-methyltransferase (238 aa).

Glu-68, Glu-93, Asp-120, and Asp-143 together coordinate S-adenosyl-L-methionine. Asp-143 is an active-site residue. Substrate-binding positions include Lys-147, Asp-179, and 216–219 (TKFE).

The protein belongs to the class I-like SAM-binding methyltransferase superfamily. TrmB family.

It catalyses the reaction guanosine(46) in tRNA + S-adenosyl-L-methionine = N(7)-methylguanosine(46) in tRNA + S-adenosyl-L-homocysteine. It functions in the pathway tRNA modification; N(7)-methylguanine-tRNA biosynthesis. Catalyzes the formation of N(7)-methylguanine at position 46 (m7G46) in tRNA. The protein is tRNA (guanine-N(7)-)-methyltransferase of Marinobacter nauticus (strain ATCC 700491 / DSM 11845 / VT8) (Marinobacter aquaeolei).